The following is a 160-amino-acid chain: Large ribosomal subunit protein eL29 (160 aa).

Basic residues predominate over residues 1–26 (MAKSKNHTTHNQSRKWHRNGIKKPRS). Disordered stretches follow at residues 1-34 (MAKSKNHTTHNQSRKWHRNGIKKPRSQRYESLKG) and 115-160 (RLCQ…VKAP). N6-methyllysine is present on lysine 5. Serine 31 carries the post-translational modification Phosphoserine. Lysine 33 bears the N6-acetyllysine mark. The segment covering 126–160 (KAGAKAPAKAQASAPAQAPKGAQAPKGAQAPVKAP) has biased composition (low complexity). Tandem repeats lie at residues 127-134 (AGAKAPAK) and 135-142 (AQASAPAQ). The 2 X 8 AA tandem repeats of A-X-A-K-A-P-A-[KQ] stretch occupies residues 127 to 142 (AGAKAPAKAQASAPAQ). Serine 138 is modified (phosphoserine). An N6-acetyllysine modification is found at lysine 145.

This sequence belongs to the eukaryotic ribosomal protein eL29 family. In terms of assembly, component of the large ribosomal subunit.

It is found in the cytoplasm. Its function is as follows. Component of the large ribosomal subunit. The ribosome is a large ribonucleoprotein complex responsible for the synthesis of proteins in the cell. The sequence is that of Large ribosomal subunit protein eL29 (Rpl29) from Mus musculus (Mouse).